The primary structure comprises 711 residues: Tyrosine-protein phosphatase 2 (711 aa).

Residues 21–130 (TESVSWIIDL…FASSHPDAIV (110 aa)) form the Rhodanese domain. Disordered stretches follow at residues 275–306 (APQQTPARPSLRSVPSYPSSNNQRRPSASRVR) and 329–376 (IIPR…RANK). 2 stretches are compositionally biased toward polar residues: residues 290-306 (SYPSSNNQRRPSASRVR) and 340-363 (NAQNDGTSTMTSKLKPSVGLSNTR). Positions 433–698 (EMTRSLAFND…KFLYDVVDYL (266 aa)) constitute a Tyrosine-protein phosphatase domain. C630 acts as the Phosphocysteine intermediate in catalysis.

Belongs to the protein-tyrosine phosphatase family. Non-receptor class subfamily.

The protein localises to the cytoplasm. It carries out the reaction O-phospho-L-tyrosyl-[protein] + H2O = L-tyrosyl-[protein] + phosphate. Functionally, plays a role in inhibiting the onset of mitosis. Dephosphorylates sty1/spc1 and wis1/spc2/sty2. The protein is Tyrosine-protein phosphatase 2 (pyp2) of Schizosaccharomyces pombe (strain 972 / ATCC 24843) (Fission yeast).